Reading from the N-terminus, the 440-residue chain is Xaa-Pro dipeptidase (440 aa).

5 residues coordinate Mn(2+): D244, D255, H335, E380, and E419.

Belongs to the peptidase M24B family. Bacterial-type prolidase subfamily. Mn(2+) is required as a cofactor.

It carries out the reaction Xaa-L-Pro dipeptide + H2O = an L-alpha-amino acid + L-proline. In terms of biological role, splits dipeptides with a prolyl residue in the C-terminal position. In Shewanella pealeana (strain ATCC 700345 / ANG-SQ1), this protein is Xaa-Pro dipeptidase.